The sequence spans 86 residues: Polcalcin Che a 3 (86 aa).

2 EF-hand domains span residues 8 to 43 (QDIA…LGSV) and 43 to 78 (VTPD…NRGL). Ca(2+) contacts are provided by D21, N23, D25, K27, E32, D56, D58, D60, and E67.

This Chenopodium album (Fat hen) protein is Polcalcin Che a 3.